The chain runs to 775 residues: MILDADYITEDGKPIIRIFKKENGEFKVEYDRNFRPYIYALLKDDSQIDEVKKITAERHGKIVRIVDVEKVKKKFLGRPIEVWKLYFEHPQDVPAIRDKIREHPAVVDIFEYDIPFAKRYLIDKGLIPMEGDEELKLLAFDIETLYHEGEEFAKGPIIMISYADEEGAKVITWKKVDLPYVEVVSSEREMIKRFLKVIREKDPDVIITYNGDSFDLPYLVKRAEKLGIKLPLGRDGSEPKMQRLGDMTAVEIKGRIHFDLYHVIRRTINLPTYTLEAVYEAIFGKPKEKVYAHEIAEAWETGKGLERVAKYSMEDAKVTYELGREFFPMEAQLSRLVGQPLWDVSRSSTGNLVEWYLLRKAYERNELAPNKPDEREYERRLRESYAGGYVKEPEKGLWEGLVSLDFRSLYPSIIITHNVSPDTLNREGCREYDVAPEVKHKFCKDFPGFIPSLLKRLLDERQEIKRKMKASKDPIEKKMLDYRQRAIKILANSYYGYYGYAKARWYCKECAESVTAWGREYIEFVRKELEEKFGFKVLYIDTDGLYATIPGAKPEEIKRKALEFVEYINAKLPGLLELEYEGFYVRGFFVTKKKYALIDEEGKIITRGLEIVRRDWSEIAKETQAKVLEAILKHGNVEEAVKIVKEVTEKLSKYEIPPEKLVIYEQITRPLHEYKAIGPHVAVAKRLAARGVKVRPGMVIGYIVLRGDGPISKRAILAEEFDPRKHKYDAEYYIENQVLPAVLRILEAFGYRKGDLRWQKTKQTGLTAWLNVKKK.

This sequence belongs to the DNA polymerase type-B family. In terms of assembly, monomer.

The catalysed reaction is DNA(n) + a 2'-deoxyribonucleoside 5'-triphosphate = DNA(n+1) + diphosphate. In terms of biological role, in addition to polymerase activity, this DNA polymerase exhibits 3' to 5' exonuclease activity. The chain is DNA polymerase (pol) from Pyrococcus glycovorans.